A 598-amino-acid chain; its full sequence is MEDGGAGLRAPRYPAEDTSPTTDRELRGFFCYGLAAEVFAVCAVGSFLPVTLEQLAREQGVLFIDKVTPCTAKNATVIANATVNALMSRAEGSDTHQCIINVFGAELTTASFAMYTFSASVFMQALALVSVSSVADHGTWRKKLLAGFGLTGSVSAMLFLLVVPQIFVVGSFLTVICVVCLGCSFVILNSYLPLLVLNHPVVQSDEDHPTASSSIPLQPISPQRSSRKSEESLHQVNRKEVDIGSKADSSDLQLSTKISSKGVGIGYMAAVSVQVICILILYIMNKTGVSSTLPLRTVLFFVGSWWLTFTIPSVMWLRDRPGPPLPTALYEGRAFVRTCMSYTIFAWKSLWKTVKVAVKLRQVLLFLIAWFLLSDAVATISATAILFARTELQMGTVAVALLSIIATSSGIIGATVWPIISKRFTLKTNHIIVCCLLLLELVPLYGLLGFLPFVQAWGVGGLQKWYEIYPLGIIHGMVMGGLSSYCRSFYGLLIPPGSEAAFYALFAITDKGSSAVGPAIVGKIVDATGQIRPAFGFLAVLIALPIPLIWMVDVEKGQEDAIRMAGLMKTTDDGHEDFESFEGSSDGHEAEGLMRDHD.

Residues 1 to 20 (MEDGGAGLRAPRYPAEDTSP) are disordered. The helical transmembrane segment at 28–48 (GFFCYGLAAEVFAVCAVGSFL) threads the bilayer. N-linked (GlcNAc...) asparagine glycans are attached at residues N74 and N80. The next 3 helical transmembrane spans lie at 111–131 (SFAMYTFSASVFMQALALVSV), 159–179 (FLLVVPQIFVVGSFLTVICVV), and 182–202 (GCSFVILNSYLPLLVLNHPVV). The interval 207–238 (DHPTASSSIPLQPISPQRSSRKSEESLHQVNR) is disordered. Residues 212-224 (SSSIPLQPISPQR) are compositionally biased toward low complexity. A compositionally biased stretch (basic and acidic residues) spans 227–238 (RKSEESLHQVNR). The chain crosses the membrane as a helical span at residues 263–283 (VGIGYMAAVSVQVICILILYI). N-linked (GlcNAc...) asparagine glycosylation is present at N285. The next 7 helical transmembrane spans lie at 297–317 (TVLFFVGSWWLTFTIPSVMWL), 363–383 (VLLFLIAWFLLSDAVATISAT), 400–420 (ALLSIIATSSGIIGATVWPII), 431–451 (IIVCCLLLLELVPLYGLLGFL), 465–485 (WYEIYPLGIIHGMVMGGLSSY), 489–509 (FYGLLIPPGSEAAFYALFAIT), and 534–554 (AFGFLAVLIALPIPLIWMVDV). The segment at 575 to 598 (HEDFESFEGSSDGHEAEGLMRDHD) is disordered. Residues 585 to 598 (SDGHEAEGLMRDHD) are compositionally biased toward basic and acidic residues.

Belongs to the ATG22 family.

It is found in the vacuole membrane. In terms of biological role, vacuolar effluxer which mediate the efflux of amino acids resulting from autophagic degradation. The release of autophagic amino acids allows the maintenance of protein synthesis and viability during nitrogen starvation. The protein is Autophagy-related protein 22-1 (atg22-1) of Sclerotinia sclerotiorum (strain ATCC 18683 / 1980 / Ss-1) (White mold).